Here is a 428-residue protein sequence, read N- to C-terminus: MRRDYIDIGYSPKETDLVCEFHIEPTAGVNFEEAATHLAGESSIDSWTEIATLSPELAEKLKPHVFYADEGAQTVRVAYSEELFELGSVPQVLSAVAGNILSMKIVDNVRLQDIAFPKSMINEFKGPNFGLPGIRKLVGVQDRPLIGTIVKPKVGLNSEKHAEVAYNSFVGGCDLVKDDENLSDQKFNSFEKRAELTLKLAEKAESETGEKKMYLCNVTAPTCREMIRRMNFLKDLGASYVMVDIVPAGWTAIQTLREEAEDAGLALHAHRCMHSAYTRNPRHGISMLVVAKLCRLIGLDQLHIGTVVGKMHGEKHEVLNLRDQCVLDKVPADESQHILAQDWRGLKPMFPVASGGLAPTMIPDLYSIFGKDVIMQFGGGIHAHPMGTVAGATACRQALEASLEGISLQDYAKNHKELETALGKWLKK.

The active-site Proton acceptor is Lys151. Lys153 contributes to the substrate binding site. Residues Lys177, Asp179, and Glu180 each coordinate Mg(2+). Residue Lys177 is modified to N6-carboxylysine. His270 acts as the Proton acceptor in catalysis. Residues Arg271, His303, 354–356, and 376–379 contribute to the substrate site; these read SGG and QFGG.

It belongs to the RuBisCO large chain family. Type III subfamily. Homodimer or homodecamer. In contrast to form I RuBisCO, the form III RuBisCO is composed solely of large subunits. Mg(2+) is required as a cofactor.

It carries out the reaction 2 (2R)-3-phosphoglycerate + 2 H(+) = D-ribulose 1,5-bisphosphate + CO2 + H2O. It catalyses the reaction D-ribulose 1,5-bisphosphate + O2 = 2-phosphoglycolate + (2R)-3-phosphoglycerate + 2 H(+). Its function is as follows. Catalyzes the addition of molecular CO(2) and H(2)O to ribulose 1,5-bisphosphate (RuBP), generating two molecules of 3-phosphoglycerate (3-PGA). Functions in an archaeal AMP degradation pathway, together with AMP phosphorylase and R15P isomerase. This Methanosarcina mazei (strain ATCC BAA-159 / DSM 3647 / Goe1 / Go1 / JCM 11833 / OCM 88) (Methanosarcina frisia) protein is Ribulose bisphosphate carboxylase.